The sequence spans 64 residues: MHWLADYWWVVLIILVGMILNGIKELRRLDHKKFLSNKPEIPPHRDNNAQWDDDDDWPDKDKKK.

The helical transmembrane segment at 3 to 23 threads the bilayer; sequence WLADYWWVVLIILVGMILNGI. The segment at 36–64 is disordered; that stretch reads SNKPEIPPHRDNNAQWDDDDDWPDKDKKK.

The protein belongs to the UPF0370 family.

It localises to the cell membrane. In Yersinia enterocolitica serotype O:8 / biotype 1B (strain NCTC 13174 / 8081), this protein is UPF0370 protein YE1145.